The following is a 257-amino-acid chain: Zinc import ATP-binding protein ZnuC (257 aa).

Positions 5-220 (VELQSVTVTF…PSYVALFGQQ (216 aa)) constitute an ABC transporter domain. 37–44 (GPNGAGKS) is an ATP binding site. The disordered stretch occupies residues 234 to 257 (HEHDLAGSPVGPCQHNKQHGHDNA).

Belongs to the ABC transporter superfamily. Zinc importer (TC 3.A.1.15.5) family. The complex is composed of two ATP-binding proteins (ZnuC), two transmembrane proteins (ZnuB) and a solute-binding protein (ZnuA).

It localises to the cell inner membrane. The catalysed reaction is Zn(2+)(out) + ATP(in) + H2O(in) = Zn(2+)(in) + ADP(in) + phosphate(in) + H(+)(in). Its function is as follows. Part of the ABC transporter complex ZnuABC involved in zinc import. Responsible for energy coupling to the transport system. In Photobacterium profundum (strain SS9), this protein is Zinc import ATP-binding protein ZnuC.